A 532-amino-acid polypeptide reads, in one-letter code: T-complex protein 1 subunit epsilon (532 aa).

This sequence belongs to the TCP-1 chaperonin family. As to quaternary structure, component of the T-complex protein 1 (TCP1) complex.

The protein resides in the cytoplasm. Functionally, molecular chaperone; assists the folding of proteins upon ATP hydrolysis. This chain is T-complex protein 1 subunit epsilon (CCT5), found in Encephalitozoon cuniculi (strain GB-M1) (Microsporidian parasite).